The sequence spans 338 residues: Glycerol-3-phosphate dehydrogenase [NAD(P)+] (338 aa).

Residues Ser12, Trp13, Arg33, and Lys110 each coordinate NADPH. Residues Lys110, Gly141, and Ser143 each contribute to the sn-glycerol 3-phosphate site. Ala145 contacts NADPH. Residues Lys196, Asp249, Ser259, Arg260, and Asn261 each coordinate sn-glycerol 3-phosphate. Residue Lys196 is the Proton acceptor of the active site. Arg260 contributes to the NADPH binding site. 2 residues coordinate NADPH: Val284 and Glu286.

This sequence belongs to the NAD-dependent glycerol-3-phosphate dehydrogenase family.

It is found in the cytoplasm. It carries out the reaction sn-glycerol 3-phosphate + NAD(+) = dihydroxyacetone phosphate + NADH + H(+). The enzyme catalyses sn-glycerol 3-phosphate + NADP(+) = dihydroxyacetone phosphate + NADPH + H(+). The protein operates within membrane lipid metabolism; glycerophospholipid metabolism. Functionally, catalyzes the reduction of the glycolytic intermediate dihydroxyacetone phosphate (DHAP) to sn-glycerol 3-phosphate (G3P), the key precursor for phospholipid synthesis. This is Glycerol-3-phosphate dehydrogenase [NAD(P)+] from Limosilactobacillus reuteri (strain DSM 20016) (Lactobacillus reuteri).